Here is a 793-residue protein sequence, read N- to C-terminus: WASP homolog-associated protein with actin, membranes and microtubules (793 aa).

Residues 1 to 253 (MDSEQPDSLD…EVATSCKLGI (253 aa)) form a mediates association with membranes region. Residues 254–623 (LKSLDEDELG…FVPVSDQTLS (370 aa)) are mediates interaction with microtubules. 2 coiled-coil regions span residues 265-290 (RRVA…SIQD) and 445-503 (LGDN…LHQH). Disordered stretches follow at residues 556 to 661 (SMVS…SFQG) and 675 to 699 (EDRP…PGSM). Positions 566-579 (SQKRLSTAHHHKTA) are enriched in basic residues. Residues 618 to 628 (SDQTLSGSSED) are compositionally biased toward polar residues. The tract at residues 624 to 793 (GSSEDLSLPP…DEPSPTEWDR (170 aa)) is mediates actin nucleation. Residues 632–654 (PPQPPAPPLPPPPPPPPPPPLPP) show a composition bias toward pro residues. 2 WH2 domains span residues 698–716 (SMDE…LRKV) and 728–745 (VNEQ…LKKV). Residues 755–785 (KKSTSDLERSIREALERIKKVSADSEEDNDE) are a coiled coil. Residues 772 to 793 (IKKVSADSEEDNDEPSPTEWDR) are disordered. The segment covering 778 to 787 (DSEEDNDEPS) has biased composition (acidic residues). Ser779 carries the post-translational modification Phosphoserine.

Interacts with ACTR3; indicative for an association with the ARP2/3 complex. Associates with microtubules; in vitro binds to tubulin heterodimer in a 1:1 stoichiometry; decorates microtubules with a repeat of 80 A along protofilaments. Interacts with RHOD (in GTP-bound form).

The protein localises to the cytoplasm. It is found in the endoplasmic reticulum-Golgi intermediate compartment. The protein resides in the cytoplasmic vesicle membrane. It localises to the golgi apparatus. Its subcellular location is the cis-Golgi network. Functionally, acts as a nucleation-promoting factor (NPF) that stimulates Arp2/3-mediated actin polymerization both at the Golgi apparatus and along tubular membranes. Involved as a regulator of Golgi positioning and morphology. Its activity in membrane tubulation requires F-actin and interaction with microtubules. Proposed to use coordinated actin-nucleating and microtubule-binding activities of distinct WHAMM molecules to drive membrane tubule elongation; when MT-bound can recruit and remodel membrane vesicles but is prevented to activate the Arp2/3 complex. Required for RhoD-dependent actin reorganization such as in cell adhesion and cell migration. Participates in vesicle transport between the endoplasmic reticulum and the Golgi complex. In Mus musculus (Mouse), this protein is WASP homolog-associated protein with actin, membranes and microtubules (Whamm).